We begin with the raw amino-acid sequence, 483 residues long: Glutamyl-tRNA(Gln) amidotransferase subunit A (483 aa).

Active-site charge relay system residues include Lys-76 and Ser-151. Residue Ser-175 is the Acyl-ester intermediate of the active site.

This sequence belongs to the amidase family. GatA subfamily. In terms of assembly, heterotrimer of A, B and C subunits.

It catalyses the reaction L-glutamyl-tRNA(Gln) + L-glutamine + ATP + H2O = L-glutaminyl-tRNA(Gln) + L-glutamate + ADP + phosphate + H(+). Allows the formation of correctly charged Gln-tRNA(Gln) through the transamidation of misacylated Glu-tRNA(Gln) in organisms which lack glutaminyl-tRNA synthetase. The reaction takes place in the presence of glutamine and ATP through an activated gamma-phospho-Glu-tRNA(Gln). This chain is Glutamyl-tRNA(Gln) amidotransferase subunit A, found in Pseudomonas putida (strain ATCC 700007 / DSM 6899 / JCM 31910 / BCRC 17059 / LMG 24140 / F1).